Here is a 102-residue protein sequence, read N- to C-terminus: Small ribosomal subunit protein uS10 (102 aa).

The protein belongs to the universal ribosomal protein uS10 family. Part of the 30S ribosomal subunit.

Involved in the binding of tRNA to the ribosomes. The sequence is that of Small ribosomal subunit protein uS10 from Methanospirillum hungatei JF-1 (strain ATCC 27890 / DSM 864 / NBRC 100397 / JF-1).